A 942-amino-acid chain; its full sequence is MYLSRIPGGAALAALLVALLLCCNFPPSIAGIEYSDVLPDSFPSAPAESLPHFLLEPEDAYIVKNKAVELVCKANPATQIYFKCNGEWVNQNDHITKERVDDVTGLVVREVQIEVSRQQVEELFGLEDFWCQCVAWSSAGTTKSKRSYVRIAYLRKNFDQEPLGKEVALEQEALLQCRPPEGVPPAEVEWLKNEEIIDSTKDTNFLITIDHNLIIKQARLSDTANYTCVAKNIVAKRRSTTATVIVFVNGGWSSWTEWSPCNNRCGHGWQKRTRTCTNPAPLNGGTMCEGQQYQKFACNTMCPVDGGWTEWSKWSACSTECTHWRSRECNAPTPKNGGKDCSGMLLDSKNCTDGLCMQNKRVLGETKSHLLESTGDVALYAGLVVAIFIIIILLMAVGIVVYRRNCREFDTDITDSSAALTGGFHPVNFKTSRHDNSHLIHPAMQPDLTANAGIYRGHMYALQDSADKIPMTNSPLLDPLPNLKIKVYNSSTVGSSPGIHDGNDLLGAKPTGTYPSDNIMNARNKNMSTQHLLTLPRDSSNSVTGTFGSLGGRLTFPNTGVSLLIPQGAIPQGKYYEMYLMINKRENTVLPSEGTQTILSPIITCGPTGLLLCKPVILTVPHCADITTSDWILQLKTQSHQGNWEEVVTLNEETLNTPCYCQLESHSCHILLDQLGTYAFVGESYSRSAIKRLQLAIFAPMLCTSLEYNLKVYCVEDTPDALKEVLELEKTLGGYLIEEPKPLMFKDSYHNLRLSIHDIPHSLWRSKLLAKYQEIPFYHVWSGSQRTLHCTFTLERYSLAATELTCKICVRQVEGEGQIFQLHTSLEENVKSFDPFCSHAENSVTTQLGPYAFKIPFLIRQKICNSLDAPNSRGNDWRLLAQKLCMDRYLNYFATKASPTGVILDLWEALHQDDGDLNTLASALEEMGKSEMMLVMATDGDC.

An N-terminal signal peptide occupies residues 1–30 (MYLSRIPGGAALAALLVALLLCCNFPPSIA). The Extracellular segment spans residues 31–380 (GIEYSDVLPD…LESTGDVALY (350 aa)). Residues 51–148 (PHFLLEPEDA…AGTTKSKRSY (98 aa)) enclose the Ig-like domain. Disulfide bonds link Cys72-Cys133, Cys84-Cys131, Cys177-Cys228, Cys261-Cys298, Cys265-Cys302, Cys276-Cys288, Cys317-Cys351, Cys321-Cys356, and Cys329-Cys341. The Ig-like C2-type domain maps to 150 to 245 (RIAYLRKNFD…KRRSTTATVI (96 aa)). An N-linked (GlcNAc...) asparagine glycan is attached at Asn225. 2 TSP type-1 domains span residues 249–303 (NGGW…TMCP) and 305–357 (DGGW…GLCM). Asn350 is a glycosylation site (N-linked (GlcNAc...) asparagine). A helical transmembrane segment spans residues 381-401 (AGLVVAIFIIIILLMAVGIVV). At 402–942 (YRRNCREFDT…MLVMATDGDC (541 aa)) the chain is on the cytoplasmic side. Residues 541–684 (NSVTGTFGSL…LGTYAFVGES (144 aa)) form the ZU5 domain. The interval 687–835 (RSAIKRLQLA…LEENVKSFDP (149 aa)) is UPA domain. The 78-residue stretch at 863-940 (ICNSLDAPNS…EMMLVMATDG (78 aa)) folds into the Death domain.

This sequence belongs to the unc-5 family. Interacts (via extracellular domain) with flrt3 (via extracellular domain). Interacts with rnd1.

The protein resides in the cell membrane. Plays a role in cell-cell adhesion during embryonic development. Receptor for netrin required for axon guidance. Mediates axon repulsion of neuronal growth cones in the developing nervous system upon ligand binding. In Xenopus laevis (African clawed frog), this protein is Netrin receptor UNC5B-b.